Here is a 247-residue protein sequence, read N- to C-terminus: Carboxy-S-adenosyl-L-methionine synthase (247 aa).

S-adenosyl-L-methionine contacts are provided by residues Tyr39, 64–66 (GCS), 89–90 (DN), 117–118 (DI), Asn132, and Arg199.

The protein belongs to the class I-like SAM-binding methyltransferase superfamily. Cx-SAM synthase family. In terms of assembly, homodimer.

The enzyme catalyses prephenate + S-adenosyl-L-methionine = carboxy-S-adenosyl-L-methionine + 3-phenylpyruvate + H2O. Catalyzes the conversion of S-adenosyl-L-methionine (SAM) to carboxy-S-adenosyl-L-methionine (Cx-SAM). In Shigella boydii serotype 4 (strain Sb227), this protein is Carboxy-S-adenosyl-L-methionine synthase.